Consider the following 499-residue polypeptide: Putative protease Do-like 12, mitochondrial (499 aa).

Residues 1 to 24 (MLFRSCVGMVSRYSRALLPTITIS) constitute a mitochondrion transit peptide. Positions 94-259 (GGSGFAIAGK…IPTPIIRHFI (166 aa)) are serine protease. Residues H110, D144, and S222 each act as charge relay system in the active site. In terms of domain architecture, PDZ spans 272-356 (GSLVLSCQSM…DENILVKVLR (85 aa)).

It belongs to the peptidase S1C family.

Its subcellular location is the mitochondrion matrix. Functionally, putative serine protease. In Arabidopsis thaliana (Mouse-ear cress), this protein is Putative protease Do-like 12, mitochondrial (DEGP12).